A 249-amino-acid polypeptide reads, in one-letter code: Cytochrome c oxidase subunit 2 (249 aa).

A run of 2 helical transmembrane segments spans residues 40–60 and 81–101; these read NIMFYLLVILGLVSWMLYTIT and IIWTIFPAVVLLIIAFPSFIL. Positions 184, 219, 221, 223, 227, and 230 each coordinate Cu cation. E221 provides a ligand contact to Mg(2+).

The protein belongs to the cytochrome c oxidase subunit 2 family. Component of the cytochrome c oxidase (complex IV, CIV), a multisubunit enzyme composed of a catalytic core of 3 subunits and several supernumerary subunits. The complex exists as a monomer or a dimer and forms supercomplexes (SCs) in the inner mitochondrial membrane with ubiquinol-cytochrome c oxidoreductase (cytochrome b-c1 complex, complex III, CIII). It depends on Cu cation as a cofactor.

It localises to the mitochondrion inner membrane. It catalyses the reaction 4 Fe(II)-[cytochrome c] + O2 + 8 H(+)(in) = 4 Fe(III)-[cytochrome c] + 2 H2O + 4 H(+)(out). Functionally, component of the cytochrome c oxidase, the last enzyme in the mitochondrial electron transport chain which drives oxidative phosphorylation. The respiratory chain contains 3 multisubunit complexes succinate dehydrogenase (complex II, CII), ubiquinol-cytochrome c oxidoreductase (cytochrome b-c1 complex, complex III, CIII) and cytochrome c oxidase (complex IV, CIV), that cooperate to transfer electrons derived from NADH and succinate to molecular oxygen, creating an electrochemical gradient over the inner membrane that drives transmembrane transport and the ATP synthase. Cytochrome c oxidase is the component of the respiratory chain that catalyzes the reduction of oxygen to water. Electrons originating from reduced cytochrome c in the intermembrane space (IMS) are transferred via the dinuclear copper A center (CU(A)) of subunit 2 and heme A of subunit 1 to the active site in subunit 1, a binuclear center (BNC) formed by heme A3 and copper B (CU(B)). The BNC reduces molecular oxygen to 2 water molecules using 4 electrons from cytochrome c in the IMS and 4 protons from the mitochondrial matrix. This Vanderwaltozyma polyspora (strain ATCC 22028 / DSM 70294 / BCRC 21397 / CBS 2163 / NBRC 10782 / NRRL Y-8283 / UCD 57-17) (Kluyveromyces polysporus) protein is Cytochrome c oxidase subunit 2 (COX2).